Consider the following 161-residue polypeptide: MRKFLSKEYHRTNPLWHVYRLVKFSKVFKNVIIIEFSKFIPSMVLKRHIYKQILNINIGNQSSIAYKVMLDIFYPELITIGSNSVIGYNVTILTHEALVDEFRYGPVTIGSNTLIGANATILPGITIGDNVKVAAGTVVSKDIPDNGFAYGNPMYIKMIRR.

It belongs to the transferase hexapeptide repeat family.

This is Putative acetyltransferase SAR0816 from Staphylococcus aureus (strain MRSA252).